Reading from the N-terminus, the 331-residue chain is MMDRYSFIMHQHRDDTVWCPSKIEEQNITRISEFHLMGLSDDLQLQPILFGLFLSMYLVTLLGNLLIILTVSSDSHLHSPMYFFLSNLSLADVSFTSTTLPKMIVDIQTHNRAISYSGCLTQMSFFMLFGCLDSLLLTAMAYDRFVAICHPLHYQFIMNPRLCGLLVFLSVLISLFVSQLHNSVVLQLTYFKSVDISHFFCDPSQLLNLACSDTFTNNIVMYFVGAISGFLPISGIFFSYYKIVSSILRMPSPGGKYKAFSTCGSHLSVVCLFYGTGLGVYLSSAVSLSPRKGAVASIVYTVVTPMLNPFIYSLRNQDIKRAMWRLLRKTV.

The Extracellular portion of the chain corresponds to 1–47; sequence MMDRYSFIMHQHRDDTVWCPSKIEEQNITRISEFHLMGLSDDLQLQP. Asn-27 is a glycosylation site (N-linked (GlcNAc...) asparagine). A helical transmembrane segment spans residues 48–68; sequence ILFGLFLSMYLVTLLGNLLII. Residues 69 to 80 lie on the Cytoplasmic side of the membrane; it reads LTVSSDSHLHSP. A helical transmembrane segment spans residues 81–100; sequence MYFFLSNLSLADVSFTSTTL. Residues 101 to 119 are Extracellular-facing; sequence PKMIVDIQTHNRAISYSGC. An intrachain disulfide couples Cys-119 to Cys-201. The chain crosses the membrane as a helical span at residues 120–140; sequence LTQMSFFMLFGCLDSLLLTAM. The Cytoplasmic segment spans residues 141-164; sequence AYDRFVAICHPLHYQFIMNPRLCG. Residues 165–185 traverse the membrane as a helical segment; that stretch reads LLVFLSVLISLFVSQLHNSVV. The Extracellular portion of the chain corresponds to 186 to 218; it reads LQLTYFKSVDISHFFCDPSQLLNLACSDTFTNN. A helical membrane pass occupies residues 219–239; it reads IVMYFVGAISGFLPISGIFFS. At 240 to 266 the chain is on the cytoplasmic side; it reads YYKIVSSILRMPSPGGKYKAFSTCGSH. Residues 267–287 form a helical membrane-spanning segment; the sequence is LSVVCLFYGTGLGVYLSSAVS. Topologically, residues 288 to 293 are extracellular; it reads LSPRKG. The helical transmembrane segment at 294–314 threads the bilayer; it reads AVASIVYTVVTPMLNPFIYSL. Residues 315–331 are Cytoplasmic-facing; the sequence is RNQDIKRAMWRLLRKTV.

It belongs to the G-protein coupled receptor 1 family.

It is found in the cell membrane. Functionally, odorant receptor. The polypeptide is Olfactory receptor 7E178 (Mus musculus (Mouse)).